The following is a 197-amino-acid chain: MSQKRLVLATKNQGKVREFRSLLAGAGFEIVGLDPDAPEVSETGDTFEENALIKARAASALTGLPALAEDSGIVVDALGGEPGVHSARWVPGSDEDRVRALLARMAEVPAERRTARYVSVIAVVLPSGREELFRGELEGRLAEAPRGTGGFGYDPIFVVADGRTVAEMALEEKNGISHRSRALARCLERLPALLEEG.

Residue 10-15 coordinates substrate; the sequence is TKNQGK. D70 acts as the Proton acceptor in catalysis. D70 contacts Mg(2+). Substrate-binding positions include S71, 151–154, K173, and 178–179; these read FGYD and HR.

It belongs to the HAM1 NTPase family. In terms of assembly, homodimer. It depends on Mg(2+) as a cofactor.

It carries out the reaction XTP + H2O = XMP + diphosphate + H(+). The catalysed reaction is dITP + H2O = dIMP + diphosphate + H(+). It catalyses the reaction ITP + H2O = IMP + diphosphate + H(+). Pyrophosphatase that catalyzes the hydrolysis of nucleoside triphosphates to their monophosphate derivatives, with a high preference for the non-canonical purine nucleotides XTP (xanthosine triphosphate), dITP (deoxyinosine triphosphate) and ITP. Seems to function as a house-cleaning enzyme that removes non-canonical purine nucleotides from the nucleotide pool, thus preventing their incorporation into DNA/RNA and avoiding chromosomal lesions. This chain is dITP/XTP pyrophosphatase, found in Symbiobacterium thermophilum (strain DSM 24528 / JCM 14929 / IAM 14863 / T).